A 430-amino-acid polypeptide reads, in one-letter code: Asparagine--tRNA ligase (430 aa).

It belongs to the class-II aminoacyl-tRNA synthetase family. In terms of assembly, homodimer.

It is found in the cytoplasm. It carries out the reaction tRNA(Asn) + L-asparagine + ATP = L-asparaginyl-tRNA(Asn) + AMP + diphosphate + H(+). The polypeptide is Asparagine--tRNA ligase (Staphylococcus saprophyticus subsp. saprophyticus (strain ATCC 15305 / DSM 20229 / NCIMB 8711 / NCTC 7292 / S-41)).